A 1899-amino-acid chain; its full sequence is Protein TIC 214 (1899 aa).

6 consecutive transmembrane segments (helical) span residues 23-43, 64-84, 87-107, 124-144, 172-192, and 217-237; these read VVVG…SYLF, FITG…HLAL, PHTI…WNNH, LSIQ…LFIL, VGWL…LVCI, and WTAR…LGVH. 2 disordered regions span residues 256-280 and 1581-1619; these read EQKK…TKKE and PKDY…GLDL. Over residues 269–280 the composition is skewed to basic and acidic residues; that stretch reads EKTFETKETKKE.

This sequence belongs to the TIC214 family. Part of the Tic complex.

Its subcellular location is the plastid. It localises to the chloroplast inner membrane. Involved in protein precursor import into chloroplasts. May be part of an intermediate translocation complex acting as a protein-conducting channel at the inner envelope. The sequence is that of Protein TIC 214 from Ceratophyllum demersum (Rigid hornwort).